Consider the following 338-residue polypeptide: MTDQAAFDTNIVTVTRFVMEEGRKARGTGEMTQLLNSLCTAVKAISTAVRKAGIAHLYGIAGTTNVTGDQVKKLDVLSNDLVVNVLKSSFATCVLVSEEDEHAIIVEPEKRGKYVVCFDPLDGSSNIDCLVSIGTIFGIYKKISKDDPSEKDALQPGRNLVAAGYALYGSATMLVLAMANGVNCFMLDPAIGEFILVDRDVKIKKKGSIYSLNEGYAKDFDPALTEYVQRKKFPPDNSAPYGARYVGSMVADVHRTLVYGGIFMYPANKKSPSGKLRLLYECNPMAYVIEKAGGMATTGKETVLDIVPTDIHQKSPIILGSPEDVTEFLEIYKKHAAK.

Thr2 bears the N-acetylthreonine mark. Residues 18-22 (VMEEG) and 28-32 (TGEMT) each bind AMP. Mg(2+) contacts are provided by Asp69 and Glu98. 113-114 (KY) is an AMP binding site. 3 residues coordinate Mg(2+): Asp119, Leu121, and Asp122. 122–125 (DGSS) is a binding site for substrate. Position 141 (Lys141) interacts with AMP. Lys151 is subject to N6-succinyllysine. Residue Ser208 is modified to Phosphoserine. Substrate-binding positions include 213 to 216 (NEGY), 244 to 249 (RYVGSM), Tyr265, and 275 to 277 (KLR). Tyr216, Tyr245, and Tyr265 each carry phosphotyrosine. Mg(2+) is bound at residue Glu281.

The protein belongs to the FBPase class 1 family. As to quaternary structure, homotetramer. The cofactor is Mg(2+).

It catalyses the reaction beta-D-fructose 1,6-bisphosphate + H2O = beta-D-fructose 6-phosphate + phosphate. It functions in the pathway carbohydrate biosynthesis; gluconeogenesis. Subject to complex allosteric regulation. The enzyme can assume an active R-state, or an inactive T-state. Intermediate conformations may exist. AMP acts as an allosteric inhibitor. AMP binding affects the turnover of bound substrate and not the affinity for substrate. Fructose 2,6-bisphosphate acts as a competitive inhibitor. Fructose 2,6-bisphosphate and AMP have synergistic effects. Functionally, catalyzes the hydrolysis of fructose 1,6-bisphosphate to fructose 6-phosphate in the presence of divalent cations, acting as a rate-limiting enzyme in gluconeogenesis. Plays a role in regulating glucose sensing and insulin secretion of pancreatic beta-cells. Appears to modulate glycerol gluconeogenesis in liver. Important regulator of appetite and adiposity; increased expression of the protein in liver after nutrient excess increases circulating satiety hormones and reduces appetite-stimulating neuropeptides and thus seems to provide a feedback mechanism to limit weight gain. This is Fructose-1,6-bisphosphatase 1 (FBP1) from Bos taurus (Bovine).